We begin with the raw amino-acid sequence, 66 residues long: UPF0337 protein SpyM3_1723 (66 aa).

The segment covering 1–10 has biased composition (basic and acidic residues); it reads MSEEKLKSKI. A disordered region spans residues 1–23; the sequence is MSEEKLKSKIEQASGGLKEGAGK.

This sequence belongs to the UPF0337 (CsbD) family.

The polypeptide is UPF0337 protein SpyM3_1723 (Streptococcus pyogenes serotype M3 (strain ATCC BAA-595 / MGAS315)).